We begin with the raw amino-acid sequence, 313 residues long: tRNA dimethylallyltransferase (313 aa).

An ATP-binding site is contributed by 11–18 (GPTAAGKS). 13 to 18 (TAAGKS) contributes to the substrate binding site. Interaction with substrate tRNA stretches follow at residues 36-39 (DSAT), 160-164 (QRIQR), and 244-249 (RCVGYR).

The protein belongs to the IPP transferase family. In terms of assembly, monomer. Requires Mg(2+) as cofactor.

It carries out the reaction adenosine(37) in tRNA + dimethylallyl diphosphate = N(6)-dimethylallyladenosine(37) in tRNA + diphosphate. Its function is as follows. Catalyzes the transfer of a dimethylallyl group onto the adenine at position 37 in tRNAs that read codons beginning with uridine, leading to the formation of N6-(dimethylallyl)adenosine (i(6)A). This Bordetella parapertussis (strain 12822 / ATCC BAA-587 / NCTC 13253) protein is tRNA dimethylallyltransferase.